A 71-amino-acid chain; its full sequence is Stathmin-1-B (71 aa).

A coiled-coil region spans residues 1–67 (KREHEKEVLQ…EIRKGKECKE (67 aa)). The SLD domain occupies 1–71 (KREHEKEVLQ…GKECKEPSED (71 aa)).

The protein belongs to the stathmin family. Binds to two alpha/beta-tubulin heterodimers. In terms of processing, from unphosphorylated forms to highly phosphorylated ones in the mature egg, followed by progressive dephosphorylation from the mid-blastula to the tailbud stage. In terms of tissue distribution, ubiquitous. Mostly abundant in brain and oocytes.

It is found in the cytoplasm. Its subcellular location is the cytoskeleton. Functionally, involved in the regulation of the microtubule (MT) filament system by destabilizing microtubules. It prevents assembly and promotes disassembly of microtubules. The sequence is that of Stathmin-1-B (stmn1-b) from Xenopus laevis (African clawed frog).